We begin with the raw amino-acid sequence, 203 residues long: MKIKHWDRWLASLKDDDYLKNIEAIKLYLAVMSIYEPDLLDEYMIDDDFHPMISRLKNVTLDVTSARFKELYITESKMNYARDELDGAMIISKTLTKSDIVGNVALPKAQVMSVLTRMNGVTDEGLDNGFEVQVHDIMEDDLYTVTLKRIDDMKYYFGTGWSTMKHSLDLVEGDVQKLYWDQFENKFIVLNFQHKTMGIMIPV.

The TF-B3 DNA-binding region spans 99–195 (DIVGNVALPK…KFIVLNFQHK (97 aa)).

The protein localises to the nucleus. This Arabidopsis thaliana (Mouse-ear cress) protein is Putative B3 domain-containing protein At1g50220.